A 238-amino-acid chain; its full sequence is Ribonuclease Rh (238 aa).

The N-terminal stretch at 1–16 (MKAVLALATLIGSTLA) is a signal peptide. Disulfide bonds link cysteine 19–cysteine 36, cysteine 26–cysteine 69, cysteine 35–cysteine 136, cysteine 79–cysteine 128, and cysteine 198–cysteine 229. Residues histidine 62, glutamate 121, and histidine 125 contribute to the active site.

Belongs to the RNase T2 family.

It carries out the reaction a ribonucleotidyl-ribonucleotide-RNA + H2O = a 3'-end 3'-phospho-ribonucleotide-RNA + a 5'-end dephospho-ribonucleoside-RNA + H(+). Functionally, this is a base non-specific ribonuclease. This Rhizopus niveus protein is Ribonuclease Rh.